The following is a 671-amino-acid chain: Signal recognition particle subunit SRP72 (671 aa).

Residue Ala-2 is modified to N-acetylalanine. Positions 9–163 (VSVPALWSEV…VVAAQSNWEK (155 aa)) are required for interaction with SRP68. 3 TPR repeats span residues 11-44 (VPAL…NKDD), 109-142 (DKLK…SQDD), and 226-259 (AIIH…KPTD). The interval 379–509 (MAQLKISQGN…KALSKHLPSS (131 aa)) is required for the interaction with the SRP68/7SL RNA complex. Residue Lys-391 forms a Glycyl lysine isopeptide (Lys-Gly) (interchain with G-Cter in SUMO1); alternate linkage. Residue Lys-391 forms a Glycyl lysine isopeptide (Lys-Gly) (interchain with G-Cter in SUMO2); alternate linkage. TPR repeat units lie at residues 406–439 (PGMV…YQNH) and 447–480 (LSLI…NPKD). The interval 532-671 (KKGGKVTGDS…KKKKGGKGGW (140 aa)) is disordered. Residues 545-617 (EQGQGDLKKK…GASSELDASK (73 aa)) form an RNA-binding region. Positions 552–562 (KKKKKKKKGKL) are enriched in basic residues. Basic and acidic residues predominate over residues 564–585 (KNYDPKVTPDPERWLPMRERSY). Phosphothreonine occurs at positions 571 and 618. A phosphoserine mark is found at Ser-630 and Ser-635. Positions 632 to 641 (ATVSASTSNI) are enriched in polar residues. Residues 655 to 671 (TKKKQQQKKKKGGKGGW) show a composition bias toward basic residues.

The protein belongs to the SRP72 family. Heterodimer with SRP68. SRP68-SRP72 heterodimer formation is stabilized by the presence of 7SL RNA. Component of a signal recognition particle (SRP) complex that consists of a 7SL RNA molecule of 300 nucleotides and six protein subunits: SRP72, SRP68, SRP54, SRP19, SRP14 and SRP9. Within the SRP complex, interacts (via N-terminus) with SRP68 (via C-terminus).

The protein localises to the cytoplasm. It localises to the endoplasmic reticulum. Functionally, component of the signal recognition particle (SRP) complex, a ribonucleoprotein complex that mediates the cotranslational targeting of secretory and membrane proteins to the endoplasmic reticulum (ER). The SRP complex interacts with the signal sequence in nascent secretory and membrane proteins and directs them to the membrane of the ER. The SRP complex targets the ribosome-nascent chain complex to the SRP receptor (SR), which is anchored in the ER, where SR compaction and GTPase rearrangement drive cotranslational protein translocation into the ER. Binds the signal recognition particle RNA (7SL RNA) in presence of SRP68. Can bind 7SL RNA with low affinity. The SRP complex possibly participates in the elongation arrest function. In Homo sapiens (Human), this protein is Signal recognition particle subunit SRP72 (SRP72).